The sequence spans 585 residues: SCF E3 ubiquitin ligase complex F-box protein grrA (585 aa).

A compositionally biased stretch (polar residues) spans 1-10 (MARSRQPTRF). Disordered stretches follow at residues 1-34 (MARSRQPTRFSSEAPSESSSSTSPERAADDDTDF) and 41-60 (DSQSSIGAGNPRDSHIQNDP). Residues 11-25 (SSEAPSESSSSTSPE) show a composition bias toward low complexity. In terms of domain architecture, F-box spans 65 to 113 (PPIAYLPPEILISIFSKLSSPRDLLSCLLVCRIWALNCVGLLWHRPSCN). 13 LRR repeats span residues 147–171 (TEDVSDGTVVPFSQCNRIERLTLTN), 172–197 (CRKLTDIGVSDLVVGSRHLQALDVSE), 198–223 (LRSLTDHTLFKVAENCNRLQGLNITG), 224–249 (CVKVTDDSLIAVSQNCRLLKRLKLNG), 250–275 (VSQVTDKAILSFAQNCPSILEIDLQE), 276–301 (CKLVTNQSVTALMTTLQNLRELRLAH), 302–329 (CTEIDDSAFLDLPRHIQMTSLRILDLTA), 330–355 (CENIRDEAVERIVSSAPRLRNLVLAK), 356–381 (CKFITDRAVWAICKLGKNLHYVHLGH), 382–407 (CSNINDSAVIQLVKSCNRIRYIDLAC), 408–432 (CSRLTDRSVQQLATLPKLRRIGLVK), 433–465 (CQLITDASILALARPAQDHSVPCSSLERVHLSY), and 466–491 (CVNLTMVGIHALLNSCPRLTHLSLTG).

Part of a SCF E3 ubiquitin ligase complex. Specifically expressed in ascus mother cells.

Its subcellular location is the cytoplasm. Involved in meiosis and required for ascospore formation. Involved in substrate recognition in ubiquitin-dependent degradation. This is SCF E3 ubiquitin ligase complex F-box protein grrA (grrA) from Emericella nidulans (strain FGSC A4 / ATCC 38163 / CBS 112.46 / NRRL 194 / M139) (Aspergillus nidulans).